Here is a 211-residue protein sequence, read N- to C-terminus: Putative ankyrin repeat protein R810 (211 aa).

ANK repeat units lie at residues threonine 31–tyrosine 61, asparagine 72–alanine 101, glutamine 103–glycine 131, tyrosine 133–glutamate 162, and methionine 163–aspartate 191.

The sequence is that of Putative ankyrin repeat protein R810 from Acanthamoeba polyphaga mimivirus (APMV).